The sequence spans 313 residues: L-2-hydroxycarboxylate dehydrogenase (NAD(P)(+)) (313 aa).

NADP(+)-binding positions include 7–13 (GASGRVG) and 34–37 (REHS). Substrate contacts are provided by Arg86 and Arg92. Residues Asn99 and 121 to 123 (ITN) contribute to the NADP(+) site. Residues Asn123 and Arg154 each contribute to the substrate site. His178 (proton acceptor) is an active-site residue.

Belongs to the LDH/MDH superfamily. Homotetramer.

The protein localises to the cytoplasm. The enzyme catalyses a (2S)-2-hydroxycarboxylate + NAD(+) = a 2-oxocarboxylate + NADH + H(+). It carries out the reaction a (2S)-2-hydroxycarboxylate + NADP(+) = a 2-oxocarboxylate + NADPH + H(+). In terms of biological role, catalyzes the reversible oxidation of (S)-malate and (S)-sulfolactate to oxaloacetate and sulfopyruvate, respectively. Can use both NADH and NADPH, although activity is higher with NADPH. Oxidation of (S)-sulfolactate is observed only in the presence of NADP(+). Can also oxidize tartrate. Cannot reduce pyruvate, nor alpha-ketoglutarate. The polypeptide is L-2-hydroxycarboxylate dehydrogenase (NAD(P)(+)) (mdh) (Methanocaldococcus jannaschii (strain ATCC 43067 / DSM 2661 / JAL-1 / JCM 10045 / NBRC 100440) (Methanococcus jannaschii)).